We begin with the raw amino-acid sequence, 317 residues long: Melanocyte-stimulating hormone receptor (317 aa).

The Extracellular segment spans residues 1-37; it reads MPMQGAQRRLLGSLNSTPTATPNLGLAANHTGAPCLE. N-linked (GlcNAc...) asparagine glycosylation is present at asparagine 29. The helical transmembrane segment at 38 to 63 threads the bilayer; it reads VSIPDGLFLSLGLVSLVENVLVVAAI. The Cytoplasmic portion of the chain corresponds to 64 to 72; sequence AKNRNLHSP. The chain crosses the membrane as a helical span at residues 73 to 93; the sequence is MYCFICCLALSDLLVSGSNML. Residues 94–118 lie on the Extracellular side of the membrane; the sequence is EMAVILLLEAGALATRASVVQQLQN. Residues 119–140 form a helical membrane-spanning segment; sequence TIDVLTCSSMLCSLCFLGAIAV. Residues 141-163 lie on the Cytoplasmic side of the membrane; it reads DRYVSIFYALRYHSIVTLPRARR. Residues 164–183 form a helical membrane-spanning segment; the sequence is AIAAIWVASVLSSTLFIAYC. Over 184 to 191 the chain is Extracellular; that stretch reads DHAAVLLC. The chain crosses the membrane as a helical span at residues 192–211; that stretch reads LVVFFLAMLVLMAVLYVHML. Residues 212-240 lie on the Cytoplasmic side of the membrane; it reads ARACQHAQGITRLHKRQLPAHQGFGLRGA. A helical transmembrane segment spans residues 241 to 266; the sequence is ATLTILLGIFFLCWGPFFLHLMLVVL. The Extracellular segment spans residues 267-279; sequence CPQHLTCSCIFKN. Residues 280 to 300 form a helical membrane-spanning segment; that stretch reads FKVFLTLIICNTIIDPLIYAF. The Cytoplasmic portion of the chain corresponds to 301–317; sequence RSQELCRTLREVLLCSW. Cysteine 315 carries S-palmitoyl cysteine lipidation.

It belongs to the G-protein coupled receptor 1 family. As to quaternary structure, interacts with MGRN1, but does not undergo MGRN1-mediated ubiquitination; this interaction competes with GNAS-binding and thus inhibits agonist-induced cAMP production. Interacts with OPN3; the interaction results in a decrease in MC1R-mediated cAMP signaling and ultimately a decrease in melanin production in melanocytes.

It is found in the cell membrane. Its function is as follows. Receptor for MSH (alpha, beta and gamma) and ACTH. The activity of this receptor is mediated by G proteins which activate adenylate cyclase. Mediates melanogenesis, the production of eumelanin (black/brown) and phaeomelanin (red/yellow), via regulation of cAMP signaling in melanocytes. This chain is Melanocyte-stimulating hormone receptor (MC1R), found in Alouatta pigra (Guatemalan howler monkey).